The following is a 541-amino-acid chain: Chaperonin GroEL 1 (541 aa).

Residues 29–32 (TLGP), 86–90 (DGTTT), Gly-413, 479–481 (NAA), and Asp-495 contribute to the ATP site.

The protein belongs to the chaperonin (HSP60) family. Forms a cylinder of 14 subunits composed of two heptameric rings stacked back-to-back. Interacts with the co-chaperonin GroES.

Its subcellular location is the cytoplasm. It catalyses the reaction ATP + H2O + a folded polypeptide = ADP + phosphate + an unfolded polypeptide.. In terms of biological role, together with its co-chaperonin GroES, plays an essential role in assisting protein folding. The GroEL-GroES system forms a nano-cage that allows encapsulation of the non-native substrate proteins and provides a physical environment optimized to promote and accelerate protein folding. The polypeptide is Chaperonin GroEL 1 (Synechocystis sp. (strain ATCC 27184 / PCC 6803 / Kazusa)).